Here is a 542-residue protein sequence, read N- to C-terminus: MVDDSHNAPFDKTKFDEVLEALVGLKDNEGNPFDDIFEELPSKRYFPDYYQIIQKPICYKMMRNKAKTGKYLSMGDFYDDIRLMVSNAQTYNMPGSLVYECSVLIANTANSLESKDGTLNEEENEEMESSINEEHKPGTNEIDVPKVIQNILDALHEEKDEQGRFLIDIFIDLPSKRLYPDYYEIIKSPMTIKMLEKRFKKGEYTTLESFVKDLNQMFINAKTYNAPGSFVYEDAEKLSQLSSSLISSFSEQPKEHSPATSKHEPEETPASPTPSVSASTSRERSTSVAPSFITSDQAATPDVLKSEEAHVESFSKESEKDQTPIPEDVPSPMDTLSQANYGAFALIKSFPSTPVPDFLNFSHKSVMGRSTFNMPNFPEPKFFEDIPNTERCILSAFICSPPQLPLPNPLRMYLPCPSLNSTEVSVITLAPQHSFLNIVINLNPALALKSYTIITLLNGKRLGAGVSTPPSTLYALEGIKHTEEPIRTVYEAKLSVGLNCLEFVLGSTEPVEPPSIEPGLPASAYSRTVERERFVLMAYVQP.

The Bromo 1 domain occupies 6 to 116 (HNAPFDKTKF…NTANSLESKD (111 aa)). 2 disordered regions span residues 114–139 (SKDGTLNEEENEEMESSINEEHKPGT) and 246–327 (ISSF…PIPE). Residues 119–128 (LNEEENEEME) are compositionally biased toward acidic residues. Positions 139–249 (TNEIDVPKVI…QLSSSLISSF (111 aa)) constitute a Bromo 2 domain. The segment covering 252-266 (QPKEHSPATSKHEPE) has biased composition (basic and acidic residues). Residues serine 257, serine 271, serine 287, and serine 313 each carry the phosphoserine modification. Residues 268–280 (TPASPTPSVSAST) show a composition bias toward low complexity. Polar residues predominate over residues 286 to 298 (TSVAPSFITSDQA). Over residues 304-322 (LKSEEAHVESFSKESEKDQ) the composition is skewed to basic and acidic residues.

As to quaternary structure, component of the RSC complex composed of at least arp9, arp42, rsc1, rsc4, rsc7, rsc9, rsc58, sfh1, snf21, ssr1, ssr2, ssr3 and ssr4. The complex interacts with histone and histone variant components of centromeric chromatin.

Its subcellular location is the nucleus. Functionally, component of the chromatin structure remodeling complex (RSC), which is involved in transcription regulation and nucleosome positioning. Controls particularly membrane and organelle development genes. This is Chromatin structure-remodeling complex subunit rsc4 (rsc4) from Schizosaccharomyces pombe (strain 972 / ATCC 24843) (Fission yeast).